The primary structure comprises 532 residues: Chondroitin sulfate N-acetylgalactosaminyltransferase 1 (532 aa).

Residues 1 to 14 (MMMVRRGLLAWISR) lie on the Cytoplasmic side of the membrane. The helical; Signal-anchor for type II membrane protein transmembrane segment at 15–35 (VVVLLVLLCCAISVLYMLACT) threads the bilayer. At 36 to 532 (PKGDEEQLAL…QKQKTSSKKT (497 aa)) the chain is on the lumenal side. Residues 57–100 (YQAVLQEWEEQHRNYVSSLKRQIAQLKEELQERSEQLRNGQYQA) are a coiled coil. Residues asparagine 315 and asparagine 324 are each glycosylated (N-linked (GlcNAc...) asparagine). A divalent metal cation is bound by residues aspartate 360 and histidine 477.

This sequence belongs to the chondroitin N-acetylgalactosaminyltransferase family. Post-translationally, N-glycosylated. Ubiquitous, with the highest levels in placenta, thyroid, bladder, prostate and adrenal gland. Detected at low levels in the other tissues examined.

It is found in the golgi apparatus. The protein localises to the golgi stack membrane. The catalysed reaction is 3-O-(beta-D-GlcA-(1-&gt;3)-beta-D-Gal-(1-&gt;3)-beta-D-Gal-(1-&gt;4)-beta-D-Xyl)-L-seryl-[protein] + UDP-N-acetyl-alpha-D-galactosamine = 3-O-(beta-D-GalNAc-(1-&gt;4)-beta-D-GlcA-(1-&gt;3)-beta-D-Gal-(1-&gt;3)-beta-D-Gal-(1-&gt;4)-beta-D-Xyl)-L-seryl-[protein] + UDP + H(+). Functionally, transfers 1,4-N-acetylgalactosamine (GalNAc) from UDP-GalNAc to the non-reducing end of glucuronic acid (GlcUA). Required for addition of the first GalNAc to the core tetrasaccharide linker and for elongation of chondroitin chains. Important role in chondroitin chain biosynthesis in cartilage formation and subsequent endochondral ossification. Moreover, is involved in the metabolism of aggrecan. This is Chondroitin sulfate N-acetylgalactosaminyltransferase 1 from Homo sapiens (Human).